The primary structure comprises 495 residues: NADH-ubiquinone oxidoreductase chain 4 (495 aa).

11 helical membrane-spanning segments follow: residues 9-29 (YSNL…PLFI), 39-59 (LIGL…RIQF), 89-109 (ISLF…SVGW), 139-159 (LLLF…IIGV), 173-193 (FFLY…LILF), 214-234 (IFLW…VPVH), 272-292 (FPEA…IAII), 313-333 (VAHM…GIGG), 335-355 (ILPM…VGVL), 367-387 (YGGL…FTLA), and 413-433 (LVAT…LWLY).

The protein belongs to the complex I subunit 4 family.

The protein resides in the mitochondrion membrane. The enzyme catalyses a ubiquinone + NADH + 5 H(+)(in) = a ubiquinol + NAD(+) + 4 H(+)(out). Functionally, core subunit of the mitochondrial membrane respiratory chain NADH dehydrogenase (Complex I) that is believed to belong to the minimal assembly required for catalysis. Complex I functions in the transfer of electrons from NADH to the respiratory chain. The immediate electron acceptor for the enzyme is believed to be ubiquinone. This is NADH-ubiquinone oxidoreductase chain 4 (ND4) from Brassica campestris (Field mustard).